We begin with the raw amino-acid sequence, 482 residues long: Proline--tRNA ligase (482 aa).

It belongs to the class-II aminoacyl-tRNA synthetase family. ProS type 3 subfamily. Homodimer.

The protein localises to the cytoplasm. It catalyses the reaction tRNA(Pro) + L-proline + ATP = L-prolyl-tRNA(Pro) + AMP + diphosphate. Functionally, catalyzes the attachment of proline to tRNA(Pro) in a two-step reaction: proline is first activated by ATP to form Pro-AMP and then transferred to the acceptor end of tRNA(Pro). The polypeptide is Proline--tRNA ligase (Thermofilum pendens (strain DSM 2475 / Hrk 5)).